Here is a 147-residue protein sequence, read N- to C-terminus: Deoxyuridine 5'-triphosphate nucleotidohydrolase (147 aa).

Arginine 24 is a binding site for Mg(2+). Residues 68 to 70 (PRS), 82 to 85 (GVID), tyrosine 88, glycine 93, isoleucine 95, and arginine 111 contribute to the dUTP site.

Belongs to the dUTPase family. The cofactor is Mg(2+).

The catalysed reaction is dUTP + H2O = dUMP + diphosphate + H(+). In terms of biological role, this enzyme is involved in nucleotide metabolism: it produces dUMP, the immediate precursor of thymidine nucleotides and it decreases the intracellular concentration of dUTP so that uracil cannot be incorporated into DNA. This chain is Deoxyuridine 5'-triphosphate nucleotidohydrolase (OPG046), found in Bos taurus (Bovine).